A 203-amino-acid polypeptide reads, in one-letter code: Translation initiation factor IF-3 (203 aa).

Over residues 172–182 (EAPKNEKKTKE) the composition is skewed to basic and acidic residues. The segment at 172–203 (EAPKNEKKTKENNPPFNRINLMKGENHAKNED) is disordered.

Belongs to the IF-3 family. In terms of assembly, monomer.

The protein resides in the cytoplasm. Functionally, IF-3 binds to the 30S ribosomal subunit and shifts the equilibrium between 70S ribosomes and their 50S and 30S subunits in favor of the free subunits, thus enhancing the availability of 30S subunits on which protein synthesis initiation begins. The polypeptide is Translation initiation factor IF-3 (Helicobacter pylori (strain ATCC 700392 / 26695) (Campylobacter pylori)).